The sequence spans 208 residues: Thiamine-phosphate synthase (208 aa).

4-amino-2-methyl-5-(diphosphooxymethyl)pyrimidine is bound by residues 37–41 (QYREK) and N73. 2 residues coordinate Mg(2+): D74 and D93. S112 contributes to the 4-amino-2-methyl-5-(diphosphooxymethyl)pyrimidine binding site. 139-141 (TIS) lines the 2-[(2R,5Z)-2-carboxy-4-methylthiazol-5(2H)-ylidene]ethyl phosphate pocket. K142 serves as a coordination point for 4-amino-2-methyl-5-(diphosphooxymethyl)pyrimidine. Residues G171 and 191-192 (IS) contribute to the 2-[(2R,5Z)-2-carboxy-4-methylthiazol-5(2H)-ylidene]ethyl phosphate site.

It belongs to the thiamine-phosphate synthase family. The cofactor is Mg(2+).

It carries out the reaction 2-[(2R,5Z)-2-carboxy-4-methylthiazol-5(2H)-ylidene]ethyl phosphate + 4-amino-2-methyl-5-(diphosphooxymethyl)pyrimidine + 2 H(+) = thiamine phosphate + CO2 + diphosphate. It catalyses the reaction 2-(2-carboxy-4-methylthiazol-5-yl)ethyl phosphate + 4-amino-2-methyl-5-(diphosphooxymethyl)pyrimidine + 2 H(+) = thiamine phosphate + CO2 + diphosphate. The enzyme catalyses 4-methyl-5-(2-phosphooxyethyl)-thiazole + 4-amino-2-methyl-5-(diphosphooxymethyl)pyrimidine + H(+) = thiamine phosphate + diphosphate. It functions in the pathway cofactor biosynthesis; thiamine diphosphate biosynthesis; thiamine phosphate from 4-amino-2-methyl-5-diphosphomethylpyrimidine and 4-methyl-5-(2-phosphoethyl)-thiazole: step 1/1. Functionally, condenses 4-methyl-5-(beta-hydroxyethyl)thiazole monophosphate (THZ-P) and 2-methyl-4-amino-5-hydroxymethyl pyrimidine pyrophosphate (HMP-PP) to form thiamine monophosphate (TMP). This is Thiamine-phosphate synthase from Listeria welshimeri serovar 6b (strain ATCC 35897 / DSM 20650 / CCUG 15529 / CIP 8149 / NCTC 11857 / SLCC 5334 / V8).